Reading from the N-terminus, the 321-residue chain is Aspartate carbamoyltransferase catalytic subunit (321 aa).

R65 and T66 together coordinate carbamoyl phosphate. K93 is an L-aspartate binding site. Residues R115, H143, and Q146 each coordinate carbamoyl phosphate. Residues R176 and R230 each coordinate L-aspartate. Positions 271 and 272 each coordinate carbamoyl phosphate.

This sequence belongs to the aspartate/ornithine carbamoyltransferase superfamily. ATCase family. As to quaternary structure, heterododecamer (2C3:3R2) of six catalytic PyrB chains organized as two trimers (C3), and six regulatory PyrI chains organized as three dimers (R2).

The catalysed reaction is carbamoyl phosphate + L-aspartate = N-carbamoyl-L-aspartate + phosphate + H(+). The protein operates within pyrimidine metabolism; UMP biosynthesis via de novo pathway; (S)-dihydroorotate from bicarbonate: step 2/3. Catalyzes the condensation of carbamoyl phosphate and aspartate to form carbamoyl aspartate and inorganic phosphate, the committed step in the de novo pyrimidine nucleotide biosynthesis pathway. The sequence is that of Aspartate carbamoyltransferase catalytic subunit from Bartonella bacilliformis (strain ATCC 35685 / KC583 / Herrer 020/F12,63).